Reading from the N-terminus, the 101-residue chain is Putative septation protein SpoVG (101 aa).

It belongs to the SpoVG family.

Could be involved in septation. The polypeptide is Putative septation protein SpoVG (Anaeromyxobacter dehalogenans (strain 2CP-C)).